Here is a 151-residue protein sequence, read N- to C-terminus: Arginine repressor (151 aa).

It belongs to the ArgR family.

Its subcellular location is the cytoplasm. It functions in the pathway amino-acid biosynthesis; L-arginine biosynthesis [regulation]. Regulates arginine biosynthesis genes. The sequence is that of Arginine repressor from Heliobacterium modesticaldum (strain ATCC 51547 / Ice1).